We begin with the raw amino-acid sequence, 164 residues long: HTH-type transcriptional regulator IscR (164 aa).

The HTH rrf2-type domain occupies 2–131 (RLTSKGRYAV…GSISLEELVK (130 aa)). A DNA-binding region (H-T-H motif) is located at residues 28–51 (LADISERQGISLSYLEQLFSRLRK). Positions 92, 98, and 104 each coordinate [2Fe-2S] cluster. A disordered region spans residues 140-164 (DRQDSDKRRTPNGRPQETINVNLRA). The segment covering 152–164 (GRPQETINVNLRA) has biased composition (polar residues).

It depends on [2Fe-2S] cluster as a cofactor.

Its function is as follows. Regulates the transcription of several operons and genes involved in the biogenesis of Fe-S clusters and Fe-S-containing proteins. The sequence is that of HTH-type transcriptional regulator IscR from Xenorhabdus nematophila (strain ATCC 19061 / DSM 3370 / CCUG 14189 / LMG 1036 / NCIMB 9965 / AN6).